The sequence spans 80 residues: Large ribosomal subunit protein bL28 (80 aa).

A disordered region spans residues 1 to 23; that stretch reads MARVCQITGKKTRTGNNVSHANN.

The protein belongs to the bacterial ribosomal protein bL28 family.

The polypeptide is Large ribosomal subunit protein bL28 (Cytophaga hutchinsonii (strain ATCC 33406 / DSM 1761 / CIP 103989 / NBRC 15051 / NCIMB 9469 / D465)).